The chain runs to 237 residues: N-alpha-acetyltransferase 40 (237 aa).

Residue glycine 2 is the site of N-myristoyl glycine attachment. The region spanning 63 to 216 is the N-acetyltransferase domain; sequence TALSPDTVEW…EDCSYEILSR (154 aa). Residues tyrosine 85, 127–129, and tyrosine 138 contribute to the substrate site; that span reads DVE. Residues 140–142 and 148–153 contribute to the acetyl-CoA site; these read VQL and RKGLGK. Threonine 174 lines the substrate pocket. Position 179 (asparagine 179) interacts with acetyl-CoA. Tyrosine 211 contributes to the substrate binding site.

The protein belongs to the acetyltransferase family. NAA40 subfamily.

It is found in the cytoplasm. Its subcellular location is the nucleus. The catalysed reaction is N-terminal L-seryl-[histone H4] + acetyl-CoA = N-terminal N(alpha)-acetyl-L-seryl-[histone H4] + CoA + H(+). The enzyme catalyses N-terminal L-seryl-[histone H2A] + acetyl-CoA = N-terminal N(alpha)-acetyl-L-seryl-[histone H2A] + CoA + H(+). Its function is as follows. N-alpha-acetyltransferase that specifically mediates the acetylation of the N-terminal residues of histones H4 and H2A. In contrast to other N-alpha-acetyltransferase, has a very specific selectivity for histones H4 and H2A N-terminus and specifically recognizes the 'Ser-Gly-Arg-Gly sequence'. This chain is N-alpha-acetyltransferase 40 (naa40), found in Danio rerio (Zebrafish).